The chain runs to 111 residues: Dynein light chain Tctex-type (111 aa).

The protein belongs to the dynein light chain Tctex-type family.

The protein resides in the cytoplasm. The protein localises to the cytoskeleton. Its function is as follows. Acts as a non-catalytic accessory component of a dynein complex. The protein is Dynein light chain Tctex-type (dlcA) of Dictyostelium discoideum (Social amoeba).